The primary structure comprises 177 residues: Large ribosomal subunit protein uL6 (177 aa).

The protein belongs to the universal ribosomal protein uL6 family. In terms of assembly, part of the 50S ribosomal subunit.

Functionally, this protein binds to the 23S rRNA, and is important in its secondary structure. It is located near the subunit interface in the base of the L7/L12 stalk, and near the tRNA binding site of the peptidyltransferase center. This Haemophilus influenzae (strain 86-028NP) protein is Large ribosomal subunit protein uL6.